A 101-amino-acid chain; its full sequence is Large ribosomal subunit protein uL23 (101 aa).

The protein belongs to the universal ribosomal protein uL23 family. Part of the 50S ribosomal subunit. Contacts protein L29, and trigger factor when it is bound to the ribosome.

Functionally, one of the early assembly proteins it binds 23S rRNA. One of the proteins that surrounds the polypeptide exit tunnel on the outside of the ribosome. Forms the main docking site for trigger factor binding to the ribosome. The protein is Large ribosomal subunit protein uL23 of Corynebacterium jeikeium (strain K411).